Here is an 872-residue protein sequence, read N- to C-terminus: Alanine--tRNA ligase (872 aa).

Zn(2+)-binding residues include H567, H571, C669, and H673.

This sequence belongs to the class-II aminoacyl-tRNA synthetase family. Zn(2+) serves as cofactor.

It is found in the cytoplasm. It carries out the reaction tRNA(Ala) + L-alanine + ATP = L-alanyl-tRNA(Ala) + AMP + diphosphate. Functionally, catalyzes the attachment of alanine to tRNA(Ala) in a two-step reaction: alanine is first activated by ATP to form Ala-AMP and then transferred to the acceptor end of tRNA(Ala). Also edits incorrectly charged Ser-tRNA(Ala) and Gly-tRNA(Ala) via its editing domain. The protein is Alanine--tRNA ligase of Streptococcus thermophilus (strain ATCC BAA-491 / LMD-9).